Consider the following 160-residue polypeptide: Lipoprotein signal peptidase (160 aa).

3 helical membrane-spanning segments follow: residues 6–26 (VWSS…IKYL), 58–78 (LAWL…AFVL), and 95–115 (FALV…HGYV). Residues Asp-117 and Asp-135 contribute to the active site. The helical transmembrane segment at 127-147 (SFAVFNLADAFITIGAGLIIL) threads the bilayer.

The protein belongs to the peptidase A8 family.

It is found in the cell inner membrane. The enzyme catalyses Release of signal peptides from bacterial membrane prolipoproteins. Hydrolyzes -Xaa-Yaa-Zaa-|-(S,diacylglyceryl)Cys-, in which Xaa is hydrophobic (preferably Leu), and Yaa (Ala or Ser) and Zaa (Gly or Ala) have small, neutral side chains.. Its pathway is protein modification; lipoprotein biosynthesis (signal peptide cleavage). This protein specifically catalyzes the removal of signal peptides from prolipoproteins. The polypeptide is Lipoprotein signal peptidase (Brucella abortus (strain S19)).